The following is a 292-amino-acid chain: Calcium-binding protein CBP (292 aa).

Residues 1 to 80 are disordered; it reads MAGYPPNPGS…YGSGGGYGAP (80 aa). Residues 12–21 show a composition bias toward gly residues; that stretch reads YPYGGAGGYG. The span at 22-40 shows a compositional bias: pro residues; the sequence is APPPPYGSSPAPSAPPYGA. 2 consecutive EF-hand domains span residues 121-156 and 187-222; these read GTDP…YSQS and YSLQ…LGYS. Residues D134, D136, S138, M140, E145, D200, D202, S204, K206, and E211 each coordinate Ca(2+).

In terms of biological role, potential calcium sensor. The chain is Calcium-binding protein CBP from Oryza sativa subsp. japonica (Rice).